The sequence spans 299 residues: Oxygen-dependent coproporphyrinogen-III oxidase (299 aa).

A substrate-binding site is contributed by serine 92. A divalent metal cation is bound by residues histidine 96 and histidine 106. The Proton donor role is filled by histidine 106. 108 to 110 (NVR) lines the substrate pocket. 2 residues coordinate a divalent metal cation: histidine 145 and histidine 175. The important for dimerization stretch occupies residues 240-275 (YVEFNLVWDRGTLFGLQTGGRTESILMSMPPLVRWE). 258 to 260 (GGR) contributes to the substrate binding site.

It belongs to the aerobic coproporphyrinogen-III oxidase family. In terms of assembly, homodimer. A divalent metal cation serves as cofactor.

It localises to the cytoplasm. The enzyme catalyses coproporphyrinogen III + O2 + 2 H(+) = protoporphyrinogen IX + 2 CO2 + 2 H2O. It functions in the pathway porphyrin-containing compound metabolism; protoporphyrin-IX biosynthesis; protoporphyrinogen-IX from coproporphyrinogen-III (O2 route): step 1/1. Involved in the heme biosynthesis. Catalyzes the aerobic oxidative decarboxylation of propionate groups of rings A and B of coproporphyrinogen-III to yield the vinyl groups in protoporphyrinogen-IX. This is Oxygen-dependent coproporphyrinogen-III oxidase from Salmonella arizonae (strain ATCC BAA-731 / CDC346-86 / RSK2980).